Consider the following 715-residue polypeptide: Methionine--tRNA ligase (715 aa).

The 'HIGH' region motif lies at 17 to 27 (PYANGPIHLGH). Positions 148, 151, 161, and 164 each coordinate Zn(2+). The short motif at 359–363 (KMSKS) is the 'KMSKS' region element. Lys-362 provides a ligand contact to ATP. In terms of domain architecture, tRNA-binding spans 614–715 (DLSKVELRVG…KDAKPGDRLK (102 aa)).

It belongs to the class-I aminoacyl-tRNA synthetase family. MetG type 1 subfamily. As to quaternary structure, homodimer. Requires Zn(2+) as cofactor.

Its subcellular location is the cytoplasm. It carries out the reaction tRNA(Met) + L-methionine + ATP = L-methionyl-tRNA(Met) + AMP + diphosphate. Is required not only for elongation of protein synthesis but also for the initiation of all mRNA translation through initiator tRNA(fMet) aminoacylation. The polypeptide is Methionine--tRNA ligase (Leptospira interrogans serogroup Icterohaemorrhagiae serovar copenhageni (strain Fiocruz L1-130)).